We begin with the raw amino-acid sequence, 148 residues long: D108-specific protein (148 aa).

The first 24 residues, 1–24 (MKKSKLLISTIISLFVLTASSVNH), serve as a signal peptide directing secretion.

Functionally, probably allows the phage to grow in a different host or environment or alteration of the cell wall or membrane. This chain is D108-specific protein (ges), found in Escherichia phage D108 (Bacteriophage D108).